A 200-amino-acid chain; its full sequence is ATP synthase subunit b 1 (200 aa).

A helical transmembrane segment spans residues 14–34 (AAVIVVVSLMAFCCAGFAVAA).

It belongs to the ATPase B chain family. In terms of assembly, F-type ATPases have 2 components, F(1) - the catalytic core - and F(0) - the membrane proton channel. F(1) has five subunits: alpha(3), beta(3), gamma(1), delta(1), epsilon(1). F(0) has three main subunits: a(1), b(2) and c(10-14). The alpha and beta chains form an alternating ring which encloses part of the gamma chain. F(1) is attached to F(0) by a central stalk formed by the gamma and epsilon chains, while a peripheral stalk is formed by the delta and b chains.

The protein resides in the cell inner membrane. In terms of biological role, f(1)F(0) ATP synthase produces ATP from ADP in the presence of a proton or sodium gradient. F-type ATPases consist of two structural domains, F(1) containing the extramembraneous catalytic core and F(0) containing the membrane proton channel, linked together by a central stalk and a peripheral stalk. During catalysis, ATP synthesis in the catalytic domain of F(1) is coupled via a rotary mechanism of the central stalk subunits to proton translocation. Functionally, component of the F(0) channel, it forms part of the peripheral stalk, linking F(1) to F(0). In Desulfosudis oleivorans (strain DSM 6200 / JCM 39069 / Hxd3) (Desulfococcus oleovorans), this protein is ATP synthase subunit b 1.